The sequence spans 2327 residues: Acetyl-CoA carboxylase 2 (2327 aa).

Positions 1–62 (MTSTHVATLG…NGGVSDSKKL (62 aa)) are disordered. Residues 134-641 (PIHSVLVANN…HTGWLDTRIA (508 aa)) form the Biotin carboxylation domain. Residues 287–481 (ECCLDSIPDE…AAQVAVGMGI (195 aa)) form the ATP-grasp domain. 313–370 (CQVVGYPAMIKASWGGGGKGIRKVHNDDEVRTLFKQVQGEVPGSPIFIMRLAAQSRHL) lines the ATP pocket. Positions 436, 450, and 452 each coordinate Mg(2+). E436, E450, and N452 together coordinate Mn(2+). The active site involves R454. A Biotinyl-binding domain is found at 768–842 (LQNDHDPSKL…QAGDLIARLD (75 aa)). Position 809 is an N6-biotinyllysine (K809). Residues 1568–1909 (PYQPLSVIDL…YIGGPLPVTT (342 aa)) form the CoA carboxyltransferase N-terminal domain. The interval 1568–2227 (PYQPLSVIDL…EDVLAKEIRA (660 aa)) is carboxyltransferase. Residues R1818, K2119, and R2121 each contribute to the CoA site. In terms of domain architecture, CoA carboxyltransferase C-terminal spans 1913-2227 (PPDRPVAYIP…EDVLAKEIRA (315 aa)).

In terms of assembly, homodimer. Biotin serves as cofactor. The cofactor is Mg(2+). Mn(2+) is required as a cofactor.

The protein resides in the cytoplasm. The protein localises to the cytosol. The enzyme catalyses hydrogencarbonate + acetyl-CoA + ATP = malonyl-CoA + ADP + phosphate + H(+). It catalyses the reaction N(6)-biotinyl-L-lysyl-[protein] + hydrogencarbonate + ATP = N(6)-carboxybiotinyl-L-lysyl-[protein] + ADP + phosphate + H(+). It functions in the pathway lipid metabolism; malonyl-CoA biosynthesis; malonyl-CoA from acetyl-CoA: step 1/1. Functionally, multifunctional enzyme that catalyzes the carboxylation of acetyl-CoA, forming malonyl-CoA, which is used in the plastid for fatty acid synthesis and in the cytosol in various biosynthetic pathways including fatty acid elongation. In Oryza sativa subsp. japonica (Rice), this protein is Acetyl-CoA carboxylase 2 (ACC2).